The chain runs to 93 residues: Serine rich endogenous peptide 6 (93 aa).

The signal sequence occupies residues 1-27; it reads MGTKCYSKLRYVVVLVLLLFVFPCSLS. Short sequence motifs (SCOOP motif) lie at residues 48–62 and 73–87; these read GIIA…APNI and ISEA…GGGR. A disordered region spans residues 52 to 93; sequence GSSPSGQAPNINNNYHGRRLMISEARPSKSKKGGGREPESPG. Polar residues predominate over residues 53 to 66; that stretch reads SSPSGQAPNINNNY. 2 consecutive short sequence motifs (sxS motif essential for MIK2 binding) follow at residues 54 to 56 and 79 to 81; these read SPS and SKS.

The protein belongs to the serine rich endogenous peptide (SCOOP) phytocytokine family. Interacts with MIK2 (via extracellular leucine-rich repeat domain); this interaction triggers the formation of complex between MIK2 and the BAK1/SERK3 and SERK4 coreceptors, and subsequent BAK1 activation by phosphorylation. In terms of tissue distribution, mostly expressed in seedlings shoots, and, to a lower extent, in roots.

The protein localises to the cell membrane. The protein resides in the secreted. It localises to the extracellular space. Its subcellular location is the apoplast. Brassicaceae-specific phytocytokine (plant endogenous peptide released into the apoplast) perceived by MIK2 in a BAK1/SERK3 and SERK4 coreceptors-dependent manner, that modulates various physiological and antimicrobial processes including growth prevention and reactive oxygen species (ROS) response regulation. Inhibits root growth. The chain is Serine rich endogenous peptide 6 from Arabidopsis thaliana (Mouse-ear cress).